The primary structure comprises 143 residues: Transcriptional regulator MraZ (143 aa).

SpoVT-AbrB domains follow at residues 5-47 (EFEH…PLSE) and 76-119 (AVQC…NKAR).

Belongs to the MraZ family. As to quaternary structure, forms oligomers.

It is found in the cytoplasm. The protein localises to the nucleoid. This Pediococcus pentosaceus (strain ATCC 25745 / CCUG 21536 / LMG 10740 / 183-1w) protein is Transcriptional regulator MraZ.